The following is a 451-amino-acid chain: NADP-specific glutamate dehydrogenase (451 aa).

Residue Lys113 is part of the active site. Ser252 carries the phosphoserine modification.

Belongs to the Glu/Leu/Phe/Val dehydrogenases family. As to quaternary structure, homohexamer.

The enzyme catalyses L-glutamate + NADP(+) + H2O = 2-oxoglutarate + NH4(+) + NADPH + H(+). The polypeptide is NADP-specific glutamate dehydrogenase (gdh1) (Schizosaccharomyces pombe (strain 972 / ATCC 24843) (Fission yeast)).